The primary structure comprises 1017 residues: Fanconi-associated nuclease 1 (1017 aa).

Residues 1–10 (MMSEGKPPDK) are compositionally biased toward basic and acidic residues. A disordered region spans residues 1 to 23 (MMSEGKPPDKKRPRRSLSISKNK). Residues 11 to 23 (KRPRRSLSISKNK) show a composition bias toward basic residues. Positions 14-22 (RRSLSISKN) match the D-box motif. Residues 41-69 (KLACPVCSKMVPRYDLNRHLDEMCANNDF) form a UBZ4-type zinc finger. Residues Cys44, Cys47, His59, and Cys64 each contribute to the Zn(2+) site. Disordered regions lie at residues 95 to 121 (EDVT…KREV) and 170 to 189 (IDKD…STVV). Positions 179–189 (SSPQSSKSTVV) are enriched in polar residues. Residue Ser180 is modified to Phosphoserine. The KEN box motif lies at 212 to 214 (KEN). Residues 671–696 (SRFVEILQRLHMYEEAVRELESLLSQ) adopt a coiled-coil conformation. Mn(2+) is bound by residues Glu834, Asp960, Glu975, and Val976. The region spanning 895-1007 (EESLRAWVAA…GAEVEVCHVV (113 aa)) is the VRR-NUC domain.

Belongs to the FAN1 family. Interacts with FANCD2 (when monoubiquitinated). Interacts with FANCI, MLH1, MLH3 and PMS2. It depends on Mn(2+) as a cofactor. Requires Mg(2+) as cofactor. Ubiquitinated and degraded during mitotic exit by the APC/C-Cdh1 complex.

The protein localises to the nucleus. The enzyme catalyses Hydrolytically removes 5'-nucleotides successively from the 3'-hydroxy termini of 3'-hydroxy-terminated oligonucleotides.. Nuclease required for the repair of DNA interstrand cross-links (ICL) recruited at sites of DNA damage by monoubiquitinated FANCD2. Specifically involved in repair of ICL-induced DNA breaks by being required for efficient homologous recombination, probably in the resolution of homologous recombination intermediates. Not involved in DNA double-strand breaks resection. Acts as a 5'-3' exonuclease that anchors at a cut end of DNA and cleaves DNA successively at every third nucleotide, allowing to excise an ICL from one strand through flanking incisions. Probably keeps excising with 3'-flap annealing until it reaches and unhooks the ICL. Acts at sites that have a 5'-terminal phosphate anchor at a nick or a 1- or 2-nucleotide flap and is augmented by a 3' flap. Also has endonuclease activity toward 5'-flaps. The chain is Fanconi-associated nuclease 1 from Homo sapiens (Human).